The following is a 435-amino-acid chain: Flavonol 7-O-rhamnosyltransferase (435 aa).

Glutamine 18 lines the UDP pocket. Glutamine 18 serves as a coordination point for UDP-beta-L-rhamnose. Histidine 21 serves as the catalytic Proton acceptor. A quercetin-binding site is contributed by histidine 21. Catalysis depends on aspartate 119, which acts as the Charge relay. Positions 250, 315, 332, 336, 337, and 340 each coordinate UDP. Residues serine 250, alanine 315, histidine 332, glycine 336, serine 337, and glutamate 340 each coordinate UDP-beta-L-rhamnose.

Belongs to the UDP-glycosyltransferase family. As to expression, highly expressed in floral buds. Expressed in stems, leaves and flowers. Expressed at low levels in roots and siliques. Expressed on the adaxial side of cotyledons and emerging leaves, in trichomes, root columella cells, and the late elongation/early differentiation zone of roots.

It catalyses the reaction quercitrin + UDP-beta-L-rhamnose = quercetin 3,7-bis-O-alpha-L-rhamnoside + UDP + H(+). It carries out the reaction quercetin 3-O-beta-D-glucoside + UDP-beta-L-rhamnose = quercetin 3-O-beta-D-glucoside-7-O-alpha-L-rhamnoside + UDP + H(+). Its pathway is flavonoid metabolism. Its function is as follows. Flavonol 7-O-rhamnosyltransferase that catalyzes the transfer of rhamnose from UDP-rhamnose to the 7-OH position of 3-O-glycosylated flavonols, such as kaempferol 3-O-rhamnoside, kaempferol 3-O-glucoside, quercetin 3-O-glucoside, quercetin 3-O-galactoside, quercetin 3-O-rhamnoside and isorhamnetin 3-O-glucoside. Is able to glycosylate the flavonols quercetin and kaempferol to yield quercetin 7-O-rhamnoside and kaempferol 7-O-rhamnoside. Shows a strict specificity for UDP-rhamnose as sugar donor. Does not act on 3-O-glycosylated anthocyanins. The accumulation of kaempferol 3-O-rhamnoside-7-O-rhamnoside inhibits basipetal auxin transport, which influences auxin distribution and plant organ development. The polypeptide is Flavonol 7-O-rhamnosyltransferase (Arabidopsis thaliana (Mouse-ear cress)).